Consider the following 481-residue polypeptide: UDP-N-acetylmuramate--L-alanine ligase (481 aa).

Position 115-121 (115-121) interacts with ATP; it reads GTHGKTT.

This sequence belongs to the MurCDEF family.

The protein resides in the cytoplasm. The catalysed reaction is UDP-N-acetyl-alpha-D-muramate + L-alanine + ATP = UDP-N-acetyl-alpha-D-muramoyl-L-alanine + ADP + phosphate + H(+). It participates in cell wall biogenesis; peptidoglycan biosynthesis. Cell wall formation. The protein is UDP-N-acetylmuramate--L-alanine ligase of Granulibacter bethesdensis (strain ATCC BAA-1260 / CGDNIH1).